Here is a 584-residue protein sequence, read N- to C-terminus: MANTVEADGSNDEGYEAAEEGPEDEEDEKREISAIRSYRDVMKLCAAHLPTESDAPNHYQAVCRALFAETMELHTFLAKVKSAKENLKKIQEMEKSDESSTDLEELKNADWARFWVQVMRDLRNGVKLKKVQERQYNPLPIEYQLTPYEMLMDDIRCKRYTLRKVMVNGDIPPRLKKSAHEIILDFIRSRPPLNPVSARKLKPTPPRPRSLHERILEEIKAERKLRPVSPEEIRRSRLDVTTPESTKNLMESSMVNGGLTSQTKENGLSSAEQVPAQRKKLLKAPTLAELDSSESEEETLHKSTSSSSVSPSFPEEPVLEAVSTRKKPPKFLPISSTPQPERRQPPQRRHSIEKETPTNVRQFLPPSRQSSRSLEEFCYPVECLALTVEEVMHIRQVLVKAELEKYQQYKDIYTALKKGKLCFCCRTRRFSFFTWSYTCQFCKRPVCSQCCKKMRLPSKPYSTLPIFSLGPSALQRGESSMRSEKPSTAHHRPLRSIARFSSKSKSMDKSDEELQFPKELMEDWSTMEVCVDCKKFISEIISSSRRSLVLANKRARLKRKTQSFYMSPPGPSEYCPSERTISEI.

The disordered stretch occupies residues 1-30; it reads MANTVEADGSNDEGYEAAEEGPEDEEDEKR. One can recognise a KIND domain in the interval 1 to 73; the sequence is MANTVEADGS…RALFAETMEL (73 aa). A compositionally biased stretch (acidic residues) spans 9 to 28; sequence GSNDEGYEAAEEGPEDEEDE. A coiled-coil region spans residues 71–99; that stretch reads MELHTFLAKVKSAKENLKKIQEMEKSDES. WH2 domains are found at residues 147–165 and 211–228; these read PYEM…LRKV and LHER…LRPV. A compositionally biased stretch (basic and acidic residues) spans 224-238; the sequence is KLRPVSPEEIRRSRL. Residues 224 to 366 are disordered; sequence KLRPVSPEEI…PTNVRQFLPP (143 aa). At Ser-229 the chain carries Phosphoserine. Positions 242 to 272 are enriched in polar residues; that stretch reads TPESTKNLMESSMVNGGLTSQTKENGLSSAE. Residues Ser-292, Ser-293, and Ser-295 each carry the phosphoserine modification. The span at 302-320 shows a compositional bias: low complexity; that stretch reads KSTSSSSVSPSFPEEPVLE. Residue Thr-337 is modified to Phosphothreonine. The segment covering 340 to 356 has biased composition (basic and acidic residues); that stretch reads PERRQPPQRRHSIEKET. Residues 357–366 show a composition bias toward polar residues; the sequence is PTNVRQFLPP. Residues 384-404 form a spir-box region; it reads LALTVEEVMHIRQVLVKAELE. A phosphoserine mark is found at Ser-506, Ser-510, and Ser-563.

The protein belongs to the spire family. As to quaternary structure, interacts with FMN2.

The protein localises to the cytoplasm. The protein resides in the cytoskeleton. It is found in the cytosol. It localises to the cleavage furrow. Its subcellular location is the perinuclear region. The protein localises to the cell membrane. The protein resides in the cytoplasmic vesicle membrane. In terms of biological role, acts as an actin nucleation factor, remains associated with the slow-growing pointed end of the new filament. Involved in intracellular vesicle transport along actin fibers, providing a novel link between actin cytoskeleton dynamics and intracellular transport. Required for asymmetric spindle positioning and asymmetric cell division during meiosis. Required for normal formation of the cleavage furrow and for polar body extrusion during female germ cell meiosis. Also acts in the nucleus: together with FMN2, promotes assembly of nuclear actin filaments in response to DNA damage in order to facilitate movement of chromatin and repair factors after DNA damage. In addition, promotes innate immune signaling downstream of dsRNA sensing. Mechanistically, contributes to IRF3 phosphorylation and activation downstream of MAVS and upstream of TBK1. The chain is Protein spire homolog 1 (SPIRE1) from Macaca fascicularis (Crab-eating macaque).